We begin with the raw amino-acid sequence, 115 residues long: Large ribosomal subunit protein bL20 (115 aa).

Belongs to the bacterial ribosomal protein bL20 family.

Its function is as follows. Binds directly to 23S ribosomal RNA and is necessary for the in vitro assembly process of the 50S ribosomal subunit. It is not involved in the protein synthesizing functions of that subunit. The polypeptide is Large ribosomal subunit protein bL20 (Prochlorococcus marinus (strain MIT 9312)).